The sequence spans 142 residues: Large ribosomal subunit protein uL13 (142 aa).

It belongs to the universal ribosomal protein uL13 family. Part of the 50S ribosomal subunit.

In terms of biological role, this protein is one of the early assembly proteins of the 50S ribosomal subunit, although it is not seen to bind rRNA by itself. It is important during the early stages of 50S assembly. In Treponema pallidum (strain Nichols), this protein is Large ribosomal subunit protein uL13.